The primary structure comprises 205 residues: MILLVGLGNPGEKYARNRHNIGFMAADGIVRRHSFSPPRARFQGIVSEGTLDGEKVIVLKPTTYMNESGRAVGEAMRFYKLTPADVVVFYDELDLEPGKVRMKTGGGAAGHNGIRSIAAHIGPEFRRVRIGIGHPGAKDRVLGYVLGDFSKAETADWVETLIEAIADAAPLLATGKDATFANKVHLALNPEPEKKPKTKEKDGDE.

Tyrosine 14 is a binding site for tRNA. Catalysis depends on histidine 19, which acts as the Proton acceptor. 3 residues coordinate tRNA: tyrosine 64, asparagine 66, and asparagine 112.

The protein belongs to the PTH family. Monomer.

The protein resides in the cytoplasm. The enzyme catalyses an N-acyl-L-alpha-aminoacyl-tRNA + H2O = an N-acyl-L-amino acid + a tRNA + H(+). Hydrolyzes ribosome-free peptidyl-tRNAs (with 1 or more amino acids incorporated), which drop off the ribosome during protein synthesis, or as a result of ribosome stalling. Functionally, catalyzes the release of premature peptidyl moieties from peptidyl-tRNA molecules trapped in stalled 50S ribosomal subunits, and thus maintains levels of free tRNAs and 50S ribosomes. This Parvibaculum lavamentivorans (strain DS-1 / DSM 13023 / NCIMB 13966) protein is Peptidyl-tRNA hydrolase.